A 132-amino-acid chain; its full sequence is MSLSDPLGDMLTRIRNAYGRKKSSVSTPASRLRTRVLDVLKAEGYIRDYSQTDFDNGKSEIEIELKYFDGAPVVREIARVSKPGRRVYVSAKSIPHVANGLGIAILSTPKGVMADHEAREQNVGGEILCQIF.

This sequence belongs to the universal ribosomal protein uS8 family. Part of the 30S ribosomal subunit. Contacts proteins S5 and S12.

Functionally, one of the primary rRNA binding proteins, it binds directly to 16S rRNA central domain where it helps coordinate assembly of the platform of the 30S subunit. The sequence is that of Small ribosomal subunit protein uS8 from Mesorhizobium japonicum (strain LMG 29417 / CECT 9101 / MAFF 303099) (Mesorhizobium loti (strain MAFF 303099)).